The sequence spans 122 residues: Large ribosomal subunit protein uL14c (122 aa).

The protein belongs to the universal ribosomal protein uL14 family. As to quaternary structure, part of the 50S ribosomal subunit.

Its subcellular location is the plastid. In terms of biological role, binds to 23S rRNA. This chain is Large ribosomal subunit protein uL14c (rpl14), found in Helicosporidium sp. subsp. Simulium jonesii (Green alga).